A 69-amino-acid polypeptide reads, in one-letter code: Putative membrane protein insertion efficiency factor (69 aa).

This sequence belongs to the UPF0161 family.

It is found in the cell inner membrane. Could be involved in insertion of integral membrane proteins into the membrane. The sequence is that of Putative membrane protein insertion efficiency factor from Nitrosomonas europaea (strain ATCC 19718 / CIP 103999 / KCTC 2705 / NBRC 14298).